Consider the following 358-residue polypeptide: Peptide chain release factor 1 (358 aa).

Gln236 bears the N5-methylglutamine mark.

Belongs to the prokaryotic/mitochondrial release factor family. In terms of processing, methylated by PrmC. Methylation increases the termination efficiency of RF1.

The protein localises to the cytoplasm. Its function is as follows. Peptide chain release factor 1 directs the termination of translation in response to the peptide chain termination codons UAG and UAA. This chain is Peptide chain release factor 1, found in Corynebacterium efficiens (strain DSM 44549 / YS-314 / AJ 12310 / JCM 11189 / NBRC 100395).